We begin with the raw amino-acid sequence, 462 residues long: Siroheme synthase (462 aa).

Residues 1 to 203 form a precorrin-2 dehydrogenase /sirohydrochlorin ferrochelatase region; the sequence is MEYLPLFANL…GKWEHAEKEI (203 aa). Residues 22-23 and 43-44 each bind NAD(+); these read NV and DD. Serine 128 is modified (phosphoserine). The interval 215–462 is uroporphyrinogen-III C-methyltransferase; the sequence is GNVALVGAGP…NWFGKIIKEQ (248 aa). Proline 224 serves as a coordination point for S-adenosyl-L-methionine. Residue aspartate 247 is the Proton acceptor of the active site. Lysine 269 (proton donor) is an active-site residue. Residues 300 to 302, isoleucine 305, 330 to 331, methionine 383, and glycine 412 each bind S-adenosyl-L-methionine; these read GGD and TA.

In the N-terminal section; belongs to the precorrin-2 dehydrogenase / sirohydrochlorin ferrochelatase family. It in the C-terminal section; belongs to the precorrin methyltransferase family.

The catalysed reaction is uroporphyrinogen III + 2 S-adenosyl-L-methionine = precorrin-2 + 2 S-adenosyl-L-homocysteine + H(+). It catalyses the reaction precorrin-2 + NAD(+) = sirohydrochlorin + NADH + 2 H(+). It carries out the reaction siroheme + 2 H(+) = sirohydrochlorin + Fe(2+). It participates in cofactor biosynthesis; adenosylcobalamin biosynthesis; precorrin-2 from uroporphyrinogen III: step 1/1. The protein operates within cofactor biosynthesis; adenosylcobalamin biosynthesis; sirohydrochlorin from precorrin-2: step 1/1. It functions in the pathway porphyrin-containing compound metabolism; siroheme biosynthesis; precorrin-2 from uroporphyrinogen III: step 1/1. Its pathway is porphyrin-containing compound metabolism; siroheme biosynthesis; siroheme from sirohydrochlorin: step 1/1. It participates in porphyrin-containing compound metabolism; siroheme biosynthesis; sirohydrochlorin from precorrin-2: step 1/1. Its function is as follows. Multifunctional enzyme that catalyzes the SAM-dependent methylations of uroporphyrinogen III at position C-2 and C-7 to form precorrin-2 via precorrin-1. Then it catalyzes the NAD-dependent ring dehydrogenation of precorrin-2 to yield sirohydrochlorin. Finally, it catalyzes the ferrochelation of sirohydrochlorin to yield siroheme. The polypeptide is Siroheme synthase (Baumannia cicadellinicola subsp. Homalodisca coagulata).